Here is a 655-residue protein sequence, read N- to C-terminus: Tumor necrosis factor receptor superfamily member 21 (655 aa).

The first 41 residues, 1-41, serve as a signal peptide directing secretion; that stretch reads MGTRASSITALASCSRTAGQVGATMVAGSLLLLGFLSTITA. Topologically, residues 42-349 are extracellular; that stretch reads QPEQKTLSLP…AHKHFDINEH (308 aa). TNFR-Cys repeat units lie at residues 50-88, 90-131, 133-167, and 170-211; these read LPGT…LRVC, SCPA…DREC, CPPG…EDVR, and QCAR…DNVC. 9 disulfide bridges follow: Cys-67-Cys-80, Cys-70-Cys-88, Cys-91-Cys-106, Cys-109-Cys-123, Cys-113-Cys-131, Cys-133-Cys-144, Cys-150-Cys-168, Cys-171-Cys-186, and Cys-192-Cys-211. Residue Asn-82 is glycosylated (N-linked (GlcNAc...) asparagine). Asn-141 carries N-linked (GlcNAc...) asparagine glycosylation. 2 disordered regions span residues 222-305 and 318-339; these read PPSS…QAPH and EATG…PRQN. Polar residues-rich tracts occupy residues 241–262 and 276–302; these read VPSS…TASV and PDNT…THQQ. N-linked (GlcNAc...) asparagine glycans are attached at residues Asn-252, Asn-257, Asn-278, and Asn-289. Positions 330–339 are enriched in basic residues; sequence APKRGHPRQN. The helical transmembrane segment at 350–370 threads the bilayer; the sequence is LPWMIVLFLLLVLVLIVVCSI. A lipid anchor (S-palmitoyl cysteine) is attached at Cys-368. The Cytoplasmic segment spans residues 371 to 655; the sequence is RKSSRTLKKG…SVYSHLPDLL (285 aa). Positions 415–498 constitute a Death domain; it reads GIDILKLVAA…DVVEKIRGLM (84 aa).

Associates with TRADD. Interacts with NGFR. Interacts with CASP8. In terms of processing, oxidized in response to reactive oxygen species (ROS), leading to endocytosis. As to expression, detected in spleen B-cells (at protein level). Ubiquitous. Highly expressed in adult spleen, thymus, testis, prostate, ovary, small intestine, colon, brain, lung and kidney, and in fetal brain, liver and lung. Detected at lower levels in adult peripheral blood leukocytes, lung, and in fetal muscle, heart, kidney, small intestine and skin. Detected in T-cells, B-cells and monocytes. In T-cells expression is highest in Th0 cells, intermediate in Th2 cells and lower in Th1 cells. Expressed at low levels in proliferating progenitors in the spinal cord, but is highly expressed by differentiating neurons within the spinal cord and adjacent dorsal root ganglia.

Its subcellular location is the cell membrane. Promotes apoptosis, possibly via a pathway that involves the activation of NF-kappa-B. Can also promote apoptosis mediated by BAX and by the release of cytochrome c from the mitochondria into the cytoplasm. Trophic-factor deprivation triggers the cleavage of surface APP by beta-secretase to release sAPP-beta which is further cleaved to release an N-terminal fragment of APP (N-APP). Negatively regulates oligodendrocyte survival, maturation and myelination. Plays a role in signaling cascades triggered by stimulation of T-cell receptors, in the adaptive immune response and in the regulation of T-cell differentiation and proliferation. Negatively regulates T-cell responses and the release of cytokines such as IL4, IL5, IL10, IL13 and IFNG by Th2 cells. Negatively regulates the production of IgG, IgM and IgM in response to antigens. May inhibit the activation of JNK in response to T-cell stimulation. Also acts as a regulator of pyroptosis: recruits CASP8 in response to reactive oxygen species (ROS) and subsequent oxidation, leading to activation of GSDMC. The sequence is that of Tumor necrosis factor receptor superfamily member 21 (Tnfrsf21) from Mus musculus (Mouse).